The chain runs to 345 residues: uncharacterized protein (345 aa).

It localises to the plastid. The protein resides in the chloroplast. This is an uncharacterized protein from Chlamydomonas moewusii (Chlamydomonas eugametos).